Here is a 157-residue protein sequence, read N- to C-terminus: Small ribosomal subunit protein uS7 (157 aa).

Belongs to the universal ribosomal protein uS7 family. In terms of assembly, part of the 30S ribosomal subunit. Contacts proteins S9 and S11.

One of the primary rRNA binding proteins, it binds directly to 16S rRNA where it nucleates assembly of the head domain of the 30S subunit. Is located at the subunit interface close to the decoding center, probably blocks exit of the E-site tRNA. This Chlamydia felis (strain Fe/C-56) (Chlamydophila felis) protein is Small ribosomal subunit protein uS7.